The primary structure comprises 293 residues: MIAVLMGGNSAERAVSLKSGEAVYQALINQNINCFEFDWHGYNLSELWQQEFDQAFIVLHGRGGEDGYIQKQLENRCIRYTGSDSNASHNGIDKARTKIIWKQHNLTLAPSIVASIHKPIEPIDFPLPWMVKPTLEGSSIGISKVDSQIQLNNALMLAWQYNSHALIEQWIEGDEYTVAILGDKALPVVKIITDQGFYDYESKYHSNKIQYLCPCGLSSSQEQVLQVIALKAFFAINAKGWGRVDFIINQHNKPYLLEINTVPGMTSHSLVPMAAKAMGMSFNKLVVAIINEI.

Residues 98-291 enclose the ATP-grasp domain; it reads KIIWKQHNLT…FNKLVVAIIN (194 aa). 124 to 177 lines the ATP pocket; that stretch reads DFPLPWMVKPTLEGSSIGISKVDSQIQLNNALMLAWQYNSHALIEQWIEGDEYT. Residues Asp-245, Glu-258, and Asn-260 each contribute to the Mg(2+) site.

It belongs to the D-alanine--D-alanine ligase family. Mg(2+) serves as cofactor. Requires Mn(2+) as cofactor.

It localises to the cytoplasm. The enzyme catalyses 2 D-alanine + ATP = D-alanyl-D-alanine + ADP + phosphate + H(+). It functions in the pathway cell wall biogenesis; peptidoglycan biosynthesis. In terms of biological role, cell wall formation. This Ruthia magnifica subsp. Calyptogena magnifica protein is D-alanine--D-alanine ligase.